We begin with the raw amino-acid sequence, 146 residues long: Mite group 2 allergen Der p 2 (146 aa).

Positions 1–17 are cleaved as a signal peptide; that stretch reads MMYKILCLSLLVAAVAR. 3 cysteine pairs are disulfide-bonded: Cys-25-Cys-136, Cys-38-Cys-44, and Cys-90-Cys-95.

This sequence belongs to the NPC2 family.

It is found in the secreted. The sequence is that of Mite group 2 allergen Der p 2 (DERP2) from Dermatophagoides pteronyssinus (European house dust mite).